Reading from the N-terminus, the 288-residue chain is 4-hydroxy-tetrahydrodipicolinate synthase (288 aa).

Thr-43 contacts pyruvate. Catalysis depends on Tyr-131, which acts as the Proton donor/acceptor. Lys-160 serves as the catalytic Schiff-base intermediate with substrate. Ile-200 is a binding site for pyruvate.

The protein belongs to the DapA family. Homotetramer; dimer of dimers.

Its subcellular location is the cytoplasm. The enzyme catalyses L-aspartate 4-semialdehyde + pyruvate = (2S,4S)-4-hydroxy-2,3,4,5-tetrahydrodipicolinate + H2O + H(+). It functions in the pathway amino-acid biosynthesis; L-lysine biosynthesis via DAP pathway; (S)-tetrahydrodipicolinate from L-aspartate: step 3/4. In terms of biological role, catalyzes the condensation of (S)-aspartate-beta-semialdehyde [(S)-ASA] and pyruvate to 4-hydroxy-tetrahydrodipicolinate (HTPA). The chain is 4-hydroxy-tetrahydrodipicolinate synthase from Methanococcus aeolicus (strain ATCC BAA-1280 / DSM 17508 / OCM 812 / Nankai-3).